The chain runs to 358 residues: PDZ and LIM domain protein 3 (358 aa).

The PDZ domain maps to 1 to 84; the sequence is MPQNVLLPGP…QLCLKIDRAE (84 aa). 2 disordered regions span residues 126–155 and 237–274; these read FILP…SVST and DTEH…RAPV. Residues 129-146 are compositionally biased toward low complexity; it reads PGRSSGSSTPSGFDPGSG. The LIM zinc-binding domain maps to 288-347; that stretch reads PICDRCGNGIVGTVVKAKDKLRHPDCFVCSDCNLNLKQKGYFFVEGQLYCEAHARARMRP.

Its subcellular location is the cytoplasm. The protein resides in the myofibril. The protein localises to the sarcomere. It localises to the z line. Functionally, may play a role in the organization of actin filament arrays within muscle cells. This chain is PDZ and LIM domain protein 3 (pdlim3), found in Xenopus laevis (African clawed frog).